We begin with the raw amino-acid sequence, 363 residues long: Phospho-N-acetylmuramoyl-pentapeptide-transferase (363 aa).

The next 10 helical transmembrane spans lie at S27–A47, T76–L96, T97–A117, L137–P157, V171–G191, G202–V222, L242–P262, A265–V285, V292–F312, and K340–L360.

The protein belongs to the glycosyltransferase 4 family. MraY subfamily. It depends on Mg(2+) as a cofactor.

The protein localises to the cell inner membrane. It catalyses the reaction UDP-N-acetyl-alpha-D-muramoyl-L-alanyl-gamma-D-glutamyl-meso-2,6-diaminopimeloyl-D-alanyl-D-alanine + di-trans,octa-cis-undecaprenyl phosphate = di-trans,octa-cis-undecaprenyl diphospho-N-acetyl-alpha-D-muramoyl-L-alanyl-D-glutamyl-meso-2,6-diaminopimeloyl-D-alanyl-D-alanine + UMP. Its pathway is cell wall biogenesis; peptidoglycan biosynthesis. Catalyzes the initial step of the lipid cycle reactions in the biosynthesis of the cell wall peptidoglycan: transfers peptidoglycan precursor phospho-MurNAc-pentapeptide from UDP-MurNAc-pentapeptide onto the lipid carrier undecaprenyl phosphate, yielding undecaprenyl-pyrophosphoryl-MurNAc-pentapeptide, known as lipid I. In Gluconobacter oxydans (strain 621H) (Gluconobacter suboxydans), this protein is Phospho-N-acetylmuramoyl-pentapeptide-transferase.